A 172-amino-acid polypeptide reads, in one-letter code: Protein GrpE (172 aa).

It belongs to the GrpE family. Homodimer.

Its subcellular location is the cytoplasm. Participates actively in the response to hyperosmotic and heat shock by preventing the aggregation of stress-denatured proteins, in association with DnaK and GrpE. It is the nucleotide exchange factor for DnaK and may function as a thermosensor. Unfolded proteins bind initially to DnaJ; upon interaction with the DnaJ-bound protein, DnaK hydrolyzes its bound ATP, resulting in the formation of a stable complex. GrpE releases ADP from DnaK; ATP binding to DnaK triggers the release of the substrate protein, thus completing the reaction cycle. Several rounds of ATP-dependent interactions between DnaJ, DnaK and GrpE are required for fully efficient folding. The protein is Protein GrpE of Thermotoga petrophila (strain ATCC BAA-488 / DSM 13995 / JCM 10881 / RKU-1).